Consider the following 133-residue polypeptide: Fatty acid-binding protein, heart (133 aa).

Residue alanine 2 is modified to N-acetylalanine. The residue at position 8 (threonine 8) is a Phosphothreonine. Tyrosine 20 carries the phosphotyrosine; by Tyr-kinases modification. Serine 23 carries the phosphoserine modification. Threonine 30 bears the Phosphothreonine mark. Residue serine 83 is modified to Phosphoserine. Position 127–129 (127–129 (RTY)) interacts with (9Z)-octadecenoate. 127-129 (RTY) contacts hexadecanoate. Residue 127 to 129 (RTY) coordinates octadecanoate.

As to expression, heart, but also skeletal muscle, kidney, brain and mammary gland.

The protein localises to the cytoplasm. Its function is as follows. FABPs are thought to play a role in the intracellular transport of long-chain fatty acids and their acyl-CoA esters. This is Fatty acid-binding protein, heart (Fabp3) from Rattus norvegicus (Rat).